A 251-amino-acid chain; its full sequence is tRNA-cytidine(32) 2-sulfurtransferase 1 (251 aa).

The PP-loop motif motif lies at 33–38 (SGGKDS). [4Fe-4S] cluster-binding residues include C108, C111, and C199.

Belongs to the TtcA family. As to quaternary structure, homodimer. Mg(2+) is required as a cofactor. Requires [4Fe-4S] cluster as cofactor.

The protein localises to the cytoplasm. The enzyme catalyses cytidine(32) in tRNA + S-sulfanyl-L-cysteinyl-[cysteine desulfurase] + AH2 + ATP = 2-thiocytidine(32) in tRNA + L-cysteinyl-[cysteine desulfurase] + A + AMP + diphosphate + H(+). Its pathway is tRNA modification. Its function is as follows. Catalyzes the ATP-dependent 2-thiolation of cytidine in position 32 of tRNA, to form 2-thiocytidine (s(2)C32). The sulfur atoms are provided by the cysteine/cysteine desulfurase (IscS) system. The sequence is that of tRNA-cytidine(32) 2-sulfurtransferase 1 from Francisella tularensis subsp. holarctica (strain FTNF002-00 / FTA).